The primary structure comprises 326 residues: Serine hydrolase-like protein (326 aa).

One can recognise an AB hydrolase-1 domain in the interval P44–F155. Residue S118 is part of the active site.

It belongs to the AB hydrolase superfamily.

Functionally, probable serine hydrolase. The sequence is that of Serine hydrolase-like protein (serhl) from Danio rerio (Zebrafish).